The sequence spans 93 residues: Early nodulin-12A (93 aa).

Residues 1–24 form the signal peptide; it reads MASFLLSILVFFLSALVLVPQGFA. The tract at residues 30-93 is disordered; sequence PAYRPPQTEP…HPPSEDNIHF (64 aa). 10 tandem repeats follow at residues 34-38, 39-43, 44-48, 49-53, 54-58, 59-63, 64-68, 69-73, 74-78, and 79-83. The segment at 34–83 is 10 X 5 AA tandem repeats of P-P-[HQVRT]-[HKNT]-[DEKR]; that stretch reads PPQTEPPVHKPPHKEPPVHKPPHKDPPVNKPPQKEPPVHKPPRKEPPTHR. Over residues 46–93 the composition is skewed to basic and acidic residues; that stretch reads HKEPPVHKPPHKDPPVNKPPQKEPPVHKPPRKEPPTHRHPPSEDNIHF.

Belongs to the plant proline-rich protein superfamily. ENOD12 family. In terms of tissue distribution, more abundant in the young nodules than the mature nodules.

The protein resides in the secreted. It is found in the cell wall. Its function is as follows. Involved in the infection process during the plant-rhizobium interaction. This chain is Early nodulin-12A (ENOD12A), found in Medicago sativa (Alfalfa).